A 147-amino-acid chain; its full sequence is Large ribosomal subunit protein uL13 (147 aa).

The protein belongs to the universal ribosomal protein uL13 family. Part of the 50S ribosomal subunit.

Its function is as follows. This protein is one of the early assembly proteins of the 50S ribosomal subunit, although it is not seen to bind rRNA by itself. It is important during the early stages of 50S assembly. The chain is Large ribosomal subunit protein uL13 from Limosilactobacillus fermentum (strain NBRC 3956 / LMG 18251) (Lactobacillus fermentum).